Consider the following 117-residue polypeptide: Small ribosomal subunit protein bS6 (117 aa).

The disordered stretch occupies residues 96-117 (HDEGPSVQMQKRDEREGRRERR).

This sequence belongs to the bacterial ribosomal protein bS6 family.

Binds together with bS18 to 16S ribosomal RNA. In Jannaschia sp. (strain CCS1), this protein is Small ribosomal subunit protein bS6.